The primary structure comprises 539 residues: Chaperonin GroEL (539 aa).

ATP is bound by residues 29-32, 86-90, Gly-413, 479-481, and Asp-495; these read TLGP, DGTTT, and DAL.

This sequence belongs to the chaperonin (HSP60) family. Forms a cylinder of 14 subunits composed of two heptameric rings stacked back-to-back. Interacts with the co-chaperonin GroES.

It is found in the cytoplasm. The enzyme catalyses ATP + H2O + a folded polypeptide = ADP + phosphate + an unfolded polypeptide.. Its function is as follows. Together with its co-chaperonin GroES, plays an essential role in assisting protein folding. The GroEL-GroES system forms a nano-cage that allows encapsulation of the non-native substrate proteins and provides a physical environment optimized to promote and accelerate protein folding. The sequence is that of Chaperonin GroEL from Pseudothermotoga lettingae (strain ATCC BAA-301 / DSM 14385 / NBRC 107922 / TMO) (Thermotoga lettingae).